The primary structure comprises 199 residues: Putative pseudouridine methyltransferase (199 aa).

S-adenosyl-L-methionine-binding residues include Met132 and Cys186.

This sequence belongs to the methyltransferase superfamily. TrmY family.

The protein resides in the cytoplasm. The protein is Putative pseudouridine methyltransferase of Vibrio atlanticus (strain LGP32) (Vibrio splendidus (strain Mel32)).